Here is a 165-residue protein sequence, read N- to C-terminus: MANQGKKPTRRSERALAFQVLYGLSFTPATSEGALRAAYAASPDVADRNAEDEKADRQAPATAPQGYAWEVIHGVWKTQAELDEAVSGFSQNWRVERMGRVELTLLRIAVYEMLFRDDVPAKVAMNEAIELSKQFGDDNSRGFINGILDAVARAVESGRLTPKGQ.

It belongs to the NusB family.

Involved in transcription antitermination. Required for transcription of ribosomal RNA (rRNA) genes. Binds specifically to the boxA antiterminator sequence of the ribosomal RNA (rrn) operons. This chain is Transcription antitermination protein NusB, found in Nitratidesulfovibrio vulgaris (strain DSM 19637 / Miyazaki F) (Desulfovibrio vulgaris).